We begin with the raw amino-acid sequence, 292 residues long: Histamine N-methyltransferase (292 aa).

Position 28 (E28) interacts with substrate. Residues G60, E89, Q94, S120, and I142 each contribute to the S-adenosyl-L-methionine site. N283 provides a ligand contact to substrate.

The protein belongs to the class I-like SAM-binding methyltransferase superfamily. HNMT family. In terms of assembly, monomer. In terms of tissue distribution, expressed in jejunum, brain &gt; lung, spleen, stomach &gt; liver, kidney.

It is found in the cytoplasm. The enzyme catalyses histamine + S-adenosyl-L-methionine = N(tau)-methylhistamine + S-adenosyl-L-homocysteine + H(+). Inactivates histamine by N-methylation. Plays an important role in degrading histamine and in regulating the airway response to histamine. The chain is Histamine N-methyltransferase (HNMT) from Cavia porcellus (Guinea pig).